The chain runs to 216 residues: Pyridoxine/pyridoxamine 5'-phosphate oxidase (216 aa).

Substrate-binding positions include R9 to Y12 and R67. FMN-binding positions include R62 to R67, Y77 to T78, K84, and Q106. 3 residues coordinate substrate: Y124, R128, and S132. Residues Q142 to S143 and W188 contribute to the FMN site. R194–H196 serves as a coordination point for substrate. R198 provides a ligand contact to FMN.

It belongs to the pyridoxamine 5'-phosphate oxidase family. As to quaternary structure, homodimer. FMN is required as a cofactor.

The enzyme catalyses pyridoxamine 5'-phosphate + O2 + H2O = pyridoxal 5'-phosphate + H2O2 + NH4(+). The catalysed reaction is pyridoxine 5'-phosphate + O2 = pyridoxal 5'-phosphate + H2O2. Its pathway is cofactor metabolism; pyridoxal 5'-phosphate salvage; pyridoxal 5'-phosphate from pyridoxamine 5'-phosphate: step 1/1. It participates in cofactor metabolism; pyridoxal 5'-phosphate salvage; pyridoxal 5'-phosphate from pyridoxine 5'-phosphate: step 1/1. Its function is as follows. Catalyzes the oxidation of either pyridoxine 5'-phosphate (PNP) or pyridoxamine 5'-phosphate (PMP) into pyridoxal 5'-phosphate (PLP). This is Pyridoxine/pyridoxamine 5'-phosphate oxidase from Psychrobacter arcticus (strain DSM 17307 / VKM B-2377 / 273-4).